A 517-amino-acid chain; its full sequence is Crotonobetaine/carnitine--CoA ligase (517 aa).

The protein belongs to the ATP-dependent AMP-binding enzyme family.

It carries out the reaction 4-(trimethylamino)butanoate + ATP + CoA = 4-(trimethylamino)butanoyl-CoA + AMP + diphosphate. The enzyme catalyses crotonobetaine + ATP + CoA = crotonobetainyl-CoA + AMP + diphosphate. It catalyses the reaction (R)-carnitine + ATP + CoA = (R)-carnitinyl-CoA + AMP + diphosphate. The protein operates within amine and polyamine metabolism; carnitine metabolism. Its function is as follows. Catalyzes the transfer of CoA to carnitine, generating the initial carnitinyl-CoA needed for the CaiB reaction cycle. Also has activity toward crotonobetaine and gamma-butyrobetaine. The protein is Crotonobetaine/carnitine--CoA ligase of Shigella flexneri.